We begin with the raw amino-acid sequence, 209 residues long: Protein ASG7 (209 aa).

Residues Met1–Arg49 lie on the Lumenal side of the membrane. A helical membrane pass occupies residues Phe50–Phe70. Residues Leu71 to Asn184 are Cytoplasmic-facing. A phosphoserine mark is found at Ser121, Ser123, and Ser125. Thr153 carries the phosphothreonine modification. A helical transmembrane segment spans residues Leu185–Cys205. Residues Lys206 to Arg209 lie on the Lumenal side of the membrane.

The protein resides in the endomembrane system. In terms of biological role, required for receptor inhibition of inappropriately expressed a-factor receptor (STE3) in MAT a cells. Inhibits signaling by relocalizing the G protein beta-gamma (STE4-STE18) subunit to intracellular membranes. May also be a mechanism for the down-regulation of the mating pheromone response after the zygotic fusion event, promoting the transition of the new diploid cell to vegetative growth. In Saccharomyces cerevisiae (strain YJM789) (Baker's yeast), this protein is Protein ASG7 (ASG7).